A 666-amino-acid polypeptide reads, in one-letter code: Transmembrane protein 201 (666 aa).

M1 bears the N-acetylmethionine mark. The Nuclear portion of the chain corresponds to 1 to 213; that stretch reads MEGVSALLAR…FSSAVKSPVQ (213 aa). Residues 214–234 form a helical membrane-spanning segment; sequence VILLRALAFLACAFLLTTALY. Residues 235 to 297 are Perinuclear space-facing; it reads GASGHFAPGT…EAWAFGQSHQ (63 aa). A helical membrane pass occupies residues 298–318; the sequence is TGVVALGLLTCLLAMLLAGRI. At 319 to 322 the chain is on the nuclear side; it reads RLRR. The helical transmembrane segment at 323–343 threads the bilayer; it reads IDAFCTCLWALLLGLHLAEQH. Over 344-356 the chain is Perinuclear space; the sequence is LQAASPSWLDTLK. The chain crosses the membrane as a helical span at residues 357 to 374; it reads FSTTSLCCLVGFTAAVAT. Residues 375–644 are Nuclear-facing; that stretch reads RKATGPRRFR…GRFGPSLVRG (270 aa). 7 positions are modified to phosphoserine: S441, S444, S450, S454, S466, S477, and S480. The segment at 502–581 is disordered; that stretch reads PLPSPAPSVA…PPHVPRKPPL (80 aa). The segment covering 508–520 has biased composition (low complexity); sequence PSVAGSVASSSGS. A Phosphoserine modification is found at S529. A helical transmembrane segment spans residues 645–665; the sequence is LLAVSLAANALFTSVFLYQSL. A topological domain (perinuclear space) is located at residue R666.

This sequence belongs to the TMEM201 family. Interacts with SUN2 and LMNA. May bind to Ran GTPase; has a greater affinity for Ran-GTP over Ran-GDP. In terms of assembly, interacts with EMD.

Its subcellular location is the nucleus inner membrane. The protein resides in the cytoplasm. The protein localises to the cytoskeleton. It is found in the spindle pole. In terms of biological role, critical regulator of angiogenesis and endothelial cell (EC) migration. Promotes the migration of endothelial cells, which is essential for angiogenesis. Interacts with the linker of nucleoskeleton and cytoskeleton (LINC) complex, which plays a vital role in connecting the cell's cytoskeleton to the nuclear envelope. This interaction is essential for maintaining cellular structure and facilitating the movement of endothelial cells, which is critical for proper vascular development. Involved in nuclear movement during fibroblast polarization and migration. Overexpression can recruit Ran GTPase to the nuclear periphery. Its function is as follows. May define a distinct membrane domain in the vicinity of the mitotic spindle. Involved in the organization of the nuclear envelope implicating EMD, SUN1 and A-type lamina. In Homo sapiens (Human), this protein is Transmembrane protein 201 (TMEM201).